Here is a 180-residue protein sequence, read N- to C-terminus: ATP-dependent protease subunit HslV (180 aa).

The active site involves threonine 5. Na(+) is bound by residues glycine 165, cysteine 168, and threonine 171.

The protein belongs to the peptidase T1B family. HslV subfamily. As to quaternary structure, a double ring-shaped homohexamer of HslV is capped on each side by a ring-shaped HslU homohexamer. The assembly of the HslU/HslV complex is dependent on binding of ATP.

Its subcellular location is the cytoplasm. The catalysed reaction is ATP-dependent cleavage of peptide bonds with broad specificity.. Allosterically activated by HslU binding. Protease subunit of a proteasome-like degradation complex believed to be a general protein degrading machinery. This chain is ATP-dependent protease subunit HslV, found in Helicobacter hepaticus (strain ATCC 51449 / 3B1).